The chain runs to 715 residues: Polyribonucleotide nucleotidyltransferase (715 aa).

Residues Asp-493 and Asp-499 each coordinate Mg(2+). Residues 560–619 form the KH domain; it reads PRMITVKINPEKIRDVIGKGGSVIRALTEETGTTIDISDDGVVTIASTSSEGMAEAKKRI. The S1 motif domain maps to 629–697; it reads GQVYEGTVLK…EKGRVRLSAK (69 aa).

It belongs to the polyribonucleotide nucleotidyltransferase family. Requires Mg(2+) as cofactor.

The protein resides in the cytoplasm. It catalyses the reaction RNA(n+1) + phosphate = RNA(n) + a ribonucleoside 5'-diphosphate. Its function is as follows. Involved in mRNA degradation. Catalyzes the phosphorolysis of single-stranded polyribonucleotides processively in the 3'- to 5'-direction. In Burkholderia cenocepacia (strain HI2424), this protein is Polyribonucleotide nucleotidyltransferase.